Reading from the N-terminus, the 187-residue chain is Ribosome-recycling factor (187 aa).

Belongs to the RRF family.

The protein resides in the cytoplasm. Responsible for the release of ribosomes from messenger RNA at the termination of protein biosynthesis. May increase the efficiency of translation by recycling ribosomes from one round of translation to another. In Nitrobacter winogradskyi (strain ATCC 25391 / DSM 10237 / CIP 104748 / NCIMB 11846 / Nb-255), this protein is Ribosome-recycling factor.